Consider the following 1623-residue polypeptide: ATP-binding cassette sub-family A member 9 (1623 aa).

Residues 31–51 (LLEWLFSLLLILFVYQLSSNL) traverse the membrane as a helical segment. A glycan (N-linked (GlcNAc...) asparagine) is linked at Asn-120. Helical transmembrane passes span 225–245 (FFIF…SVNI), 265–285 (AFWL…AVLM), 295–315 (VVLT…LSLI), 329–349 (FLTG…GFTA), 354–374 (LPAF…TTGM), and 398–418 (LIMA…VLAL). The ABC transporter 1 domain maps to 481 to 716 (IRIKNLKKEY…WGIGYHLSLH (236 aa)). 517-524 (GHSGAGKT) is a binding site for ATP. The next 7 membrane-spanning stretches (helical) occupy residues 863–883 (LMTV…EHLV), 1025–1045 (AFFW…GSIS), 1071–1091 (LVDI…DSVF), 1107–1127 (IPCS…ISFI), 1135–1155 (SGIW…ATDI), 1163–1183 (LLIC…LIFS), and 1199–1219 (QLVF…FFIL). The ABC transporter 2 domain maps to 1287-1520 (LRKEYIGRTK…FGKDYLLEMK (234 aa)). An ATP-binding site is contributed by 1325–1332 (GHNGAGKS).

Belongs to the ABC transporter superfamily. ABCA family. As to expression, highly expressed in heart and to lower extent in kidney, brain and spleen. Weakly expressed in developing and adult brains. Weakly expressed in the cerebellar granular layer at P14 and P21.

The protein resides in the membrane. Its function is as follows. Transporter that may play a role in monocyte differentiation and lipid transport and homeostasis. This Mus musculus (Mouse) protein is ATP-binding cassette sub-family A member 9 (Abca9).